Here is a 532-residue protein sequence, read N- to C-terminus: Bone morphogenetic protein receptor type-1A (532 aa).

The N-terminal stretch at 1–23 (MTQLYTYIRLLGACLFIISHVQG) is a signal peptide. At 24 to 152 (QNLDSMLHGT…IGPFFDGSVR (129 aa)) the chain is on the extracellular side. Disulfide bonds link Cys61–Cys82, Cys63–Cys67, and Cys76–Cys100. Asn73 is a glycosylation site (N-linked (GlcNAc...) asparagine). Residues 107 to 109 (DFQ) are mediates specificity for BMP ligand. Cystine bridges form between Cys110-Cys124 and Cys125-Cys130. The chain crosses the membrane as a helical span at residues 153 to 176 (WLAVLISMAVCIVAMIVFSSCFCY). Topologically, residues 177–532 (KHYCKSISSR…KMVESQDVKI (356 aa)) are cytoplasmic. A GS domain is found at 204–233 (ESLKDLIDQSQSSGSGSGLPLLVQRTIAKQ). The Protein kinase domain occupies 234 to 525 (IQMVRQVGKG…RIKKTLAKMV (292 aa)). ATP-binding positions include 240–248 (VGKGRYGEV) and Lys261. The active-site Proton acceptor is Asp362.

It belongs to the protein kinase superfamily. TKL Ser/Thr protein kinase family. TGFB receptor subfamily. Interacts with low affinity with GDF5; positively regulates chondrocyte differentiation. Interacts with BMP4. Interacts with SCUBE3. Interacts with TSC22D1/TSC-22. Interacts with BMP2; the interaction may induce HAMP expression. Interacts with BMP6. Interacts with heterodimers composed of BMP2 and BMP6 in vitro; the interaction may induce HAMP expression. Mg(2+) is required as a cofactor. Requires Mn(2+) as cofactor. In terms of processing, glycosylated.

The protein resides in the cell membrane. Its subcellular location is the cell surface. It carries out the reaction L-threonyl-[receptor-protein] + ATP = O-phospho-L-threonyl-[receptor-protein] + ADP + H(+). The catalysed reaction is L-seryl-[receptor-protein] + ATP = O-phospho-L-seryl-[receptor-protein] + ADP + H(+). Functionally, on ligand binding, forms a receptor complex consisting of two type II and two type I transmembrane serine/threonine kinases. Type II receptors phosphorylate and activate type I receptors which autophosphorylate, then bind and activate SMAD transcriptional regulators. Receptor for BMP2, BMP4, GDF5 and GDF6. Positively regulates chondrocyte differentiation through GDF5 interaction. Mediates induction of adipogenesis by GDF6. May promote the expression of HAMP, potentially via its interaction with BMP2. In Rattus norvegicus (Rat), this protein is Bone morphogenetic protein receptor type-1A (Bmpr1a).